We begin with the raw amino-acid sequence, 1289 residues long: uncharacterized protein (1289 aa).

The first 23 residues, 1-23, serve as a signal peptide directing secretion; sequence MRKYTVIASILLSFLSVLSGGHH. One can recognise an LTD domain in the interval 141–277; sequence EGYQADLAHI…VVISTNTGKD (137 aa).

This is an uncharacterized protein from Bacillus subtilis (strain 168).